The chain runs to 486 residues: Bifunctional protein GlmU (486 aa).

The pyrophosphorylase stretch occupies residues 1–236; sequence MTDQNLAIVV…SWLVDGINDR (236 aa). UDP-N-acetyl-alpha-D-glucosamine is bound by residues 11–14, lysine 25, glutamine 78, and 83–84; these read LAAG and GT. Aspartate 109 lines the Mg(2+) pocket. Glycine 146, glutamate 161, asparagine 176, and asparagine 234 together coordinate UDP-N-acetyl-alpha-D-glucosamine. Asparagine 234 is a Mg(2+) binding site. Residues 237-257 form a linker region; that stretch reads AQLSEAAAKLNALTVRAWQLA. An N-acetyltransferase region spans residues 258-486; it reads GVTVQDPATT…ASNAAEESGE (229 aa). UDP-N-acetyl-alpha-D-glucosamine contacts are provided by arginine 339 and lysine 357. Histidine 369 functions as the Proton acceptor in the catalytic mechanism. Residues tyrosine 372 and asparagine 383 each contribute to the UDP-N-acetyl-alpha-D-glucosamine site. Residues alanine 386, 392–393, and alanine 429 each bind acetyl-CoA; that span reads NY. Residues 459–486 form a disordered region; sequence RRPGTDAARAAQRNGAAEASNAAEESGE. Positions 465 to 486 are enriched in low complexity; it reads AARAAQRNGAAEASNAAEESGE.

It in the N-terminal section; belongs to the N-acetylglucosamine-1-phosphate uridyltransferase family. In the C-terminal section; belongs to the transferase hexapeptide repeat family. As to quaternary structure, homotrimer. The cofactor is Mg(2+).

It is found in the cytoplasm. The enzyme catalyses alpha-D-glucosamine 1-phosphate + acetyl-CoA = N-acetyl-alpha-D-glucosamine 1-phosphate + CoA + H(+). It catalyses the reaction N-acetyl-alpha-D-glucosamine 1-phosphate + UTP + H(+) = UDP-N-acetyl-alpha-D-glucosamine + diphosphate. The protein operates within nucleotide-sugar biosynthesis; UDP-N-acetyl-alpha-D-glucosamine biosynthesis; N-acetyl-alpha-D-glucosamine 1-phosphate from alpha-D-glucosamine 6-phosphate (route II): step 2/2. It functions in the pathway nucleotide-sugar biosynthesis; UDP-N-acetyl-alpha-D-glucosamine biosynthesis; UDP-N-acetyl-alpha-D-glucosamine from N-acetyl-alpha-D-glucosamine 1-phosphate: step 1/1. Its pathway is bacterial outer membrane biogenesis; LPS lipid A biosynthesis. Functionally, catalyzes the last two sequential reactions in the de novo biosynthetic pathway for UDP-N-acetylglucosamine (UDP-GlcNAc). The C-terminal domain catalyzes the transfer of acetyl group from acetyl coenzyme A to glucosamine-1-phosphate (GlcN-1-P) to produce N-acetylglucosamine-1-phosphate (GlcNAc-1-P), which is converted into UDP-GlcNAc by the transfer of uridine 5-monophosphate (from uridine 5-triphosphate), a reaction catalyzed by the N-terminal domain. This chain is Bifunctional protein GlmU, found in Leifsonia xyli subsp. xyli (strain CTCB07).